Here is a 1479-residue protein sequence, read N- to C-terminus: Chromosome partition protein MukB (1479 aa).

34 to 41 (GGNGAGKS) contacts ATP. 5 coiled-coil regions span residues 337-418 (LNLV…QYQQ), 511-604 (QAER…APVW), 780-810 (RAAR…DVQK), 847-1116 (ELDR…AKAG), and 1206-1265 (DDPV…LQAV). The flexible hinge stretch occupies residues 666–783 (PGGSEDPRLN…EVPLFGRAAR (118 aa)).

This sequence belongs to the SMC family. MukB subfamily. In terms of assembly, homodimerization via its hinge domain. Binds to DNA via its C-terminal region. Interacts, and probably forms a ternary complex, with MukE and MukF via its C-terminal region. The complex formation is stimulated by calcium or magnesium. Interacts with tubulin-related protein FtsZ.

Its subcellular location is the cytoplasm. It localises to the nucleoid. Its function is as follows. Plays a central role in chromosome condensation, segregation and cell cycle progression. Functions as a homodimer, which is essential for chromosome partition. Involved in negative DNA supercoiling in vivo, and by this means organize and compact chromosomes. May achieve or facilitate chromosome segregation by condensation DNA from both sides of a centrally located replisome during cell division. This is Chromosome partition protein MukB from Pectobacterium atrosepticum (strain SCRI 1043 / ATCC BAA-672) (Erwinia carotovora subsp. atroseptica).